Here is a 411-residue protein sequence, read N- to C-terminus: Multidrug resistance protein MdtA (411 aa).

Residues 1 to 26 (MNNNKKTKKRFSLIIILLIVIAGAIA) form the signal peptide. Positions 35–55 (SAPPVSKDTPTANTPNRSTAG) are enriched in polar residues. Residues 35–64 (SAPPVSKDTPTANTPNRSTAGSRRPPMPPV) form a disordered region.

The protein belongs to the membrane fusion protein (MFP) (TC 8.A.1) family. In terms of assembly, part of a tripartite efflux system composed of MdtA, MdtB and MdtC.

The protein resides in the cell inner membrane. This chain is Multidrug resistance protein MdtA, found in Proteus mirabilis (strain HI4320).